Reading from the N-terminus, the 559-residue chain is Potassium-transporting ATPase potassium-binding subunit (559 aa).

The next 13 membrane-spanning stretches (helical) occupy residues 5 to 25 (GFLL…PLGS), 27 to 47 (LARL…RILW), 63 to 83 (LLAL…LLFW), 132 to 152 (GLTV…FALI), 170 to 190 (LVRI…LFFI), 253 to 273 (LAQM…FGEA), 283 to 303 (LLWA…WAEV), 327 to 347 (FGVL…CGAV), 356 to 376 (ALGG…FGGV), 379 to 399 (GLYG…LMIG), 416 to 436 (MTAL…ALAM), 484 to 504 (LLAF…MAIA), and 524 to 544 (GALF…LTFI).

It belongs to the KdpA family. The system is composed of three essential subunits: KdpA, KdpB and KdpC.

Its subcellular location is the cell inner membrane. Functionally, part of the high-affinity ATP-driven potassium transport (or Kdp) system, which catalyzes the hydrolysis of ATP coupled with the electrogenic transport of potassium into the cytoplasm. This subunit binds the periplasmic potassium ions and delivers the ions to the membrane domain of KdpB through an intramembrane tunnel. In Salmonella typhimurium (strain LT2 / SGSC1412 / ATCC 700720), this protein is Potassium-transporting ATPase potassium-binding subunit.